Here is a 1056-residue protein sequence, read N- to C-terminus: Kinesin-like protein KIN-5A (1056 aa).

The segment at 1–44 (MDRRIGLTSPSPKSTEKSGRDLRSGGDANGGANTNSNSIPRGDK) is disordered. Residues 14-24 (STEKSGRDLRS) show a composition bias toward basic and acidic residues. The Kinesin motor domain maps to 49-395 (NVQVILRCRP…LDYAHRAKNI (347 aa)). Position 135–142 (135–142 (GQTGTGKT)) interacts with ATP. Positions 443–525 (QEEAEKKAMT…STIKEKEYVI (83 aa)) form a coiled coil.

The protein belongs to the TRAFAC class myosin-kinesin ATPase superfamily. Kinesin family. KIN-5/BimC subfamily.

The protein resides in the cytoplasm. It is found in the cytoskeleton. It localises to the spindle. In terms of biological role, responsible for microtubule translocation. May be important for the organization of phragmoplast-specific arrays of microtubules. Plays an essential role in stabilizing the mitotic spindle. Required during mitotic cytokinesis. The polypeptide is Kinesin-like protein KIN-5A (Oryza sativa subsp. japonica (Rice)).